Here is a 304-residue protein sequence, read N- to C-terminus: Phosphoribosylaminoimidazole-succinocarboxamide synthase (304 aa).

The protein belongs to the SAICAR synthetase family.

It carries out the reaction 5-amino-1-(5-phospho-D-ribosyl)imidazole-4-carboxylate + L-aspartate + ATP = (2S)-2-[5-amino-1-(5-phospho-beta-D-ribosyl)imidazole-4-carboxamido]succinate + ADP + phosphate + 2 H(+). Its pathway is purine metabolism; IMP biosynthesis via de novo pathway; 5-amino-1-(5-phospho-D-ribosyl)imidazole-4-carboxamide from 5-amino-1-(5-phospho-D-ribosyl)imidazole-4-carboxylate: step 1/2. The chain is Phosphoribosylaminoimidazole-succinocarboxamide synthase (ADE1) from Komagataella pastoris (Yeast).